The sequence spans 376 residues: Lipid-A-disaccharide synthase (376 aa).

This sequence belongs to the LpxB family.

The enzyme catalyses a lipid X + a UDP-2-N,3-O-bis[(3R)-3-hydroxyacyl]-alpha-D-glucosamine = a lipid A disaccharide + UDP + H(+). It functions in the pathway bacterial outer membrane biogenesis; LPS lipid A biosynthesis. Its function is as follows. Condensation of UDP-2,3-diacylglucosamine and 2,3-diacylglucosamine-1-phosphate to form lipid A disaccharide, a precursor of lipid A, a phosphorylated glycolipid that anchors the lipopolysaccharide to the outer membrane of the cell. In Coxiella burnetii (strain CbuG_Q212) (Coxiella burnetii (strain Q212)), this protein is Lipid-A-disaccharide synthase.